A 984-amino-acid polypeptide reads, in one-letter code: Probable beta-galactosidase C (984 aa).

An N-terminal signal peptide occupies residues 1 to 23 (MRLLSFIYLVWLALLTGTPQVSA). The substrate site is built by tyrosine 82, asparagine 127, alanine 128, glutamate 129, and asparagine 187. Glutamate 188 serves as the catalytic Proton donor. An N-linked (GlcNAc...) asparagine glycan is attached at asparagine 197. Residue tyrosine 251 participates in substrate binding. The cysteines at positions 257 and 304 are disulfide-linked. N-linked (GlcNAc...) asparagine glycosylation occurs at asparagine 276. Glutamate 287 (nucleophile) is an active-site residue. Substrate is bound at residue tyrosine 353. N-linked (GlcNAc...) asparagine glycosylation is found at asparagine 391, asparagine 421, asparagine 434, asparagine 517, asparagine 602, asparagine 677, asparagine 715, asparagine 720, asparagine 759, and asparagine 805.

The protein belongs to the glycosyl hydrolase 35 family.

The protein localises to the secreted. It carries out the reaction Hydrolysis of terminal non-reducing beta-D-galactose residues in beta-D-galactosides.. In terms of biological role, cleaves beta-linked terminal galactosyl residues from gangliosides, glycoproteins, and glycosaminoglycans. This chain is Probable beta-galactosidase C (lacC), found in Aspergillus flavus (strain ATCC 200026 / FGSC A1120 / IAM 13836 / NRRL 3357 / JCM 12722 / SRRC 167).